The following is a 68-amino-acid chain: Conotoxin Lp5.2 (68 aa).

A signal peptide spans 1–19 (MRCVPVFIILLLLASPAAP). Positions 20-54 (KSLETRIQNDLIRAGLTDADLKTEKGFLSGLLNVA) are excised as a propeptide.

The protein belongs to the conotoxin T superfamily. Post-translationally, contains 2 disulfide bonds that can be either 'C1-C3, C2-C4' or 'C1-C4, C2-C3', since these disulfide connectivities have been observed for conotoxins with cysteine framework V (for examples, see AC P0DQQ7 and AC P81755). Expressed by the venom duct.

Its subcellular location is the secreted. In Conus leopardus (Leopard cone), this protein is Conotoxin Lp5.2.